The sequence spans 447 residues: Phosphoglucosamine mutase (447 aa).

Ser-102 acts as the Phosphoserine intermediate in catalysis. 4 residues coordinate Mg(2+): Ser-102, Asp-241, Asp-243, and Asp-245. Ser-102 is subject to Phosphoserine.

This sequence belongs to the phosphohexose mutase family. Requires Mg(2+) as cofactor. Post-translationally, activated by phosphorylation.

It carries out the reaction alpha-D-glucosamine 1-phosphate = D-glucosamine 6-phosphate. In terms of biological role, catalyzes the conversion of glucosamine-6-phosphate to glucosamine-1-phosphate. This chain is Phosphoglucosamine mutase, found in Methylococcus capsulatus (strain ATCC 33009 / NCIMB 11132 / Bath).